A 501-amino-acid chain; its full sequence is MALGALLLLLGVLGTPLAPGARGSEAEGQLIKKLFSNYDSSVRPAREVGDRVGVSIGLTLAQLISLNEKDEEMSTKVYLDLEWTDYRLSWDPAEHDGIDSLRITAESVWLPDVVLLNNNDGNFDVALDINVVVSFEGSVRWQPPGLYRSSCSIQVTYFPFDWQNCTMVFSSYSYDSSEVSLKTGLDPEGEERQEVYIHEGTFIENGQWEIIHKPSRLIQLPGDQRGGKEGHHEEVIFYLIIRRKPLFYLVNVIAPCILITLLAIFVFYLPPDAGEKMGLSIFALLTLTVFLLLLADKVPETSLAVPIIIKYLMFTMVLVTFSVILSVVVLNLHHRSPHTHQMPFWVRQIFIHKLPPYLGLKRPKPERDQLPEPHHSLSPRSGWGRGTDEYFIRKPPSDFLFPKLNRFQPESSAPDLRRFIDGPTRAVGLPQELREVISSISYMARQLQEQEDHDALKEDWQFVAMVVDRLFLWTFIVFTSVGTLVIFLDATYHLPPPEPFP.

Residues 1 to 23 (MALGALLLLLGVLGTPLAPGARG) form the signal peptide. Residues 24-244 (SEAEGQLIKK…VIFYLIIRRK (221 aa)) are Extracellular-facing. Cysteines 151 and 165 form a disulfide. Residue N164 is glycosylated (N-linked (GlcNAc...) asparagine). Helical transmembrane passes span 245–269 (PLFYLVNVIAPCILITLLAIFVFYL), 277–295 (MGLSIFALLTLTVFLLLLA), and 311–332 (YLMFTMVLVTFSVILSVVVLNL). Over 333-469 (HHRSPHTHQM…WQFVAMVVDR (137 aa)) the chain is Cytoplasmic. Residues 362–382 (RPKPERDQLPEPHHSLSPRSG) are disordered. Basic and acidic residues predominate over residues 363 to 375 (PKPERDQLPEPHH). Position 390 is a phosphotyrosine; by Tyr-kinases (Y390). A helical transmembrane segment spans residues 470-488 (LFLWTFIVFTSVGTLVIFL).

Belongs to the ligand-gated ion channel (TC 1.A.9) family. Acetylcholine receptor (TC 1.A.9.1) subfamily. Beta-1/CHRNB1 sub-subfamily. Pentamer of two alpha chains, and one each of the beta, delta, and gamma (in immature muscle) or epsilon (in mature muscle) chains. The muscle heteropentamer composed of alpha-1, beta-1, delta, epsilon subunits interacts with the alpha-conotoxin ImII.

The protein localises to the postsynaptic cell membrane. The protein resides in the cell membrane. It carries out the reaction K(+)(in) = K(+)(out). The enzyme catalyses Na(+)(in) = Na(+)(out). After binding acetylcholine, the AChR responds by an extensive change in conformation that affects all subunits and leads to opening of an ion-conducting channel across the plasma membrane. The chain is Acetylcholine receptor subunit beta (Chrnb1) from Mus musculus (Mouse).